Here is a 327-residue protein sequence, read N- to C-terminus: Lipoyl synthase (327 aa).

[4Fe-4S] cluster is bound by residues Cys72, Cys77, Cys83, Cys98, Cys102, Cys105, and Ser313. A Radical SAM core domain is found at 83-302 (CWSHGTATIM…RKVGLEKGFL (220 aa)).

The protein belongs to the radical SAM superfamily. Lipoyl synthase family. Requires [4Fe-4S] cluster as cofactor.

The protein resides in the cytoplasm. The enzyme catalyses [[Fe-S] cluster scaffold protein carrying a second [4Fe-4S](2+) cluster] + N(6)-octanoyl-L-lysyl-[protein] + 2 oxidized [2Fe-2S]-[ferredoxin] + 2 S-adenosyl-L-methionine + 4 H(+) = [[Fe-S] cluster scaffold protein] + N(6)-[(R)-dihydrolipoyl]-L-lysyl-[protein] + 4 Fe(3+) + 2 hydrogen sulfide + 2 5'-deoxyadenosine + 2 L-methionine + 2 reduced [2Fe-2S]-[ferredoxin]. It functions in the pathway protein modification; protein lipoylation via endogenous pathway; protein N(6)-(lipoyl)lysine from octanoyl-[acyl-carrier-protein]: step 2/2. Functionally, catalyzes the radical-mediated insertion of two sulfur atoms into the C-6 and C-8 positions of the octanoyl moiety bound to the lipoyl domains of lipoate-dependent enzymes, thereby converting the octanoylated domains into lipoylated derivatives. The chain is Lipoyl synthase from Francisella tularensis subsp. holarctica (strain FTNF002-00 / FTA).